We begin with the raw amino-acid sequence, 383 residues long: BRISC and BRCA1-A complex member 2 (383 aa).

M1 carries the post-translational modification N-acetylmethionine. S2 is modified (phosphoserine). UEV-like regions lie at residues 30 to 147 (DATN…TLLE) and 275 to 364 (IAAF…RAKA).

Belongs to the BABAM2 family. Component of the ARISC complex, at least composed of UIMC1/RAP80, ABRAXAS1, BRCC3/BRCC36, BABAM2 and BABAM1/NBA1. Component of the BRCA1-A complex, at least composed of BRCA1, BARD1, UIMC1/RAP80, ABRAXAS1, BRCC3/BRCC36, BABAM2 and BABAM1/NBA1. In the BRCA1-A complex, interacts directly with ABRAXAS1, BRCC3/BRCC36 and BABAM1/NBA1. Binds polyubiquitin. Component of the BRISC complex, at least composed of ABRAXAS2, BRCC3/BRCC36, BABAM2 and BABAM1/NBA1. Identified in a complex with SHMT2 and the other subunits of the BRISC complex. Component of the BRCA1/BRCA2 containing complex (BRCC), which also contains BRCA1, BRCA2, BARD1, BRCC3/BRCC36 and RAD51. BRCC is a ubiquitin E3 ligase complex that enhances cellular survival following DNA damage. May interact with FAS and TNFRSF1A. In terms of tissue distribution, expressed in brain, heart, kidney, liver, lung, testis, germinal center B-cells and various mouse cell lines.

The protein resides in the cytoplasm. It is found in the nucleus. Component of the BRCA1-A complex, a complex that specifically recognizes 'Lys-63'-linked ubiquitinated histones H2A and H2AX at DNA lesions sites, leading to target the BRCA1-BARD1 heterodimer to sites of DNA damage at double-strand breaks (DSBs). The BRCA1-A complex also possesses deubiquitinase activity that specifically removes 'Lys-63'-linked ubiquitin on histones H2A and H2AX. In the BRCA1-A complex, it acts as an adapter that bridges the interaction between BABAM1/NBA1 and the rest of the complex, thereby being required for the complex integrity and modulating the E3 ubiquitin ligase activity of the BRCA1-BARD1 heterodimer. Probably also plays a role as a component of the BRISC complex, a multiprotein complex that specifically cleaves 'Lys-63'-linked ubiquitin. May regulate TNF-alpha signaling through its interactions with TNFRSF1A. Its function is as follows. Component of the BRCA1-A complex, a complex that specifically recognizes 'Lys-63'-linked ubiquitinated histones H2A and H2AX at DNA lesions sites, leading to target the BRCA1-BARD1 heterodimer to sites of DNA damage at double-strand breaks (DSBs). The BRCA1-A complex also possesses deubiquitinase activity that specifically removes 'Lys-63'-linked ubiquitin on histones H2A and H2AX. In the BRCA1-A complex, it acts as an adapter that bridges the interaction between BABAM1/NBA1 and the rest of the complex, thereby being required for the complex integrity and modulating the E3 ubiquitin ligase activity of the BRCA1-BARD1 heterodimer. Component of the BRISC complex, a multiprotein complex that specifically cleaves 'Lys-63'-linked ubiquitin in various substrates. Within the BRISC complex, acts as an adapter that bridges the interaction between BABAM1/NBA1 and the rest of the complex, thereby being required for the complex integrity. The BRISC complex is required for normal mitotic spindle assembly and microtubule attachment to kinetochores via its role in deubiquitinating NUMA1. The BRISC complex plays a role in interferon signaling via its role in the deubiquitination of the interferon receptor IFNAR1; deubiquitination increases IFNAR1 activity by enhancing its stability and cell surface expression. Down-regulates the response to bacterial lipopolysaccharide (LPS) via its role in IFNAR1 deubiquitination. May play a role in homeostasis or cellular differentiation in cells of neural, epithelial and germline origins. May also act as a death receptor-associated anti-apoptotic protein, which inhibits the mitochondrial apoptotic pathway. May regulate TNF-alpha signaling through its interactions with TNFRSF1A; however these effects may be indirect. The sequence is that of BRISC and BRCA1-A complex member 2 (Babam2) from Mus musculus (Mouse).